A 443-amino-acid polypeptide reads, in one-letter code: Exodeoxyribonuclease 7 large subunit (443 aa).

It belongs to the XseA family. Heterooligomer composed of large and small subunits.

The protein localises to the cytoplasm. It carries out the reaction Exonucleolytic cleavage in either 5'- to 3'- or 3'- to 5'-direction to yield nucleoside 5'-phosphates.. Its function is as follows. Bidirectionally degrades single-stranded DNA into large acid-insoluble oligonucleotides, which are then degraded further into small acid-soluble oligonucleotides. The polypeptide is Exodeoxyribonuclease 7 large subunit (Legionella pneumophila (strain Lens)).